The primary structure comprises 40 residues: Ice-structuring protein GS-8 (40 aa).

Met-1 carries the blocked amino end (Met) modification.

This sequence belongs to the type-I AFP family.

Antifreeze proteins lower the blood freezing point. This chain is Ice-structuring protein GS-8, found in Myoxocephalus aenaeus (Grubby sculpin).